The following is a 793-amino-acid chain: Phenylalanine--tRNA ligase beta subunit (793 aa).

Residues 39 to 154 (TCSFSSIITA…ENTPLGESAC (116 aa)) enclose the tRNA-binding domain. The B5 domain maps to 403 to 481 (PQASTLSFRT…QPWKVENKKA (79 aa)). 4 residues coordinate Mg(2+): Asp-457, Asp-463, Glu-466, and Glu-467. Residues 697-793 (PIYPSSFRDI…QINDTKGTID (97 aa)) enclose the FDX-ACB domain.

This sequence belongs to the phenylalanyl-tRNA synthetase beta subunit family. Type 1 subfamily. As to quaternary structure, tetramer of two alpha and two beta subunits. The cofactor is Mg(2+).

Its subcellular location is the cytoplasm. It catalyses the reaction tRNA(Phe) + L-phenylalanine + ATP = L-phenylalanyl-tRNA(Phe) + AMP + diphosphate + H(+). The sequence is that of Phenylalanine--tRNA ligase beta subunit from Chlamydia caviae (strain ATCC VR-813 / DSM 19441 / 03DC25 / GPIC) (Chlamydophila caviae).